The following is a 39-amino-acid chain: Potassium channel toxin alpha-KTx 2.9 (39 aa).

3 disulfides stabilise this stretch: cysteine 7–cysteine 29, cysteine 13–cysteine 34, and cysteine 17–cysteine 36. Asparagine 39 bears the Asparagine amide mark.

Belongs to the short scorpion toxin superfamily. Potassium channel inhibitor family. Alpha-KTx 02 subfamily. Expressed by the venom gland.

The protein localises to the secreted. Its function is as follows. Blocks Kv1.3/KCNA3 voltage-gated potassium channels of human T-lymphocytes (Kd=0.25 nM). The sequence is that of Potassium channel toxin alpha-KTx 2.9 from Centruroides elegans (Bark scorpion).